Here is a 299-residue protein sequence, read N- to C-terminus: tRNA dimethylallyltransferase (299 aa).

11–18 (GPTAVGKT) provides a ligand contact to ATP. 13-18 (TAVGKT) provides a ligand contact to substrate. The interval 36–39 (DSQQ) is interaction with substrate tRNA.

The protein belongs to the IPP transferase family. In terms of assembly, monomer. Mg(2+) serves as cofactor.

The catalysed reaction is adenosine(37) in tRNA + dimethylallyl diphosphate = N(6)-dimethylallyladenosine(37) in tRNA + diphosphate. Its function is as follows. Catalyzes the transfer of a dimethylallyl group onto the adenine at position 37 in tRNAs that read codons beginning with uridine, leading to the formation of N6-(dimethylallyl)adenosine (i(6)A). The polypeptide is tRNA dimethylallyltransferase (Streptococcus pyogenes serotype M18 (strain MGAS8232)).